We begin with the raw amino-acid sequence, 181 residues long: ADP-ribosylation factor 1 (181 aa).

G2 carries the post-translational modification N-acetylglycine; alternate. G2 carries N-myristoyl glycine; alternate lipidation. An important for the stable binding to the membranes region spans residues 3 to 16; that stretch reads NIFANLFKGLFGKK. Residues 24–32, 126–129, and A160 each bind GTP; these read GLDAAGKTT and NKQD.

It belongs to the small GTPase superfamily. Arf family. In terms of assembly, interacts (when activated) with GGA1, GGA2 and GGA3; the interaction is required for proper subcellular location of GGA1, GGA2 and GGA3. Interacts with ARHGAP21, ASAP2, GGA1, HERC1, PRKCABP, PIP5K1B, TMED2, PSCD2, TMED10 and GRIA2. Interacts with ARFGAP1, which hydrolyzes GTP and thus, regulates its function. Interacts with PI4KB in the Golgi complex. Interacts with NCS1/FREQ in the Golgi and at the plasma membrane. Interacts with PLEKHA3. Interacts with PLEKHA8; the interaction, together with phosphatidylinositol 4-phosphate binding, is required for FAPP2-mediated glucosylceramide transfer activity. Interacts (activated) with PICK1 (via PDZ domain); the interaction blocks Arp2/3 complex inhibition. Interacts with IQSEC1. Interacts with C9orf72.

It is found in the golgi apparatus membrane. Its subcellular location is the synapse. The protein localises to the synaptosome. It localises to the postsynaptic density. It catalyses the reaction GTP + H2O = GDP + phosphate + H(+). With respect to regulation, alternates between an inactive GDP-bound form and an active GTP-bound form. Activated by guanine nucleotide-exchange factors (GEFs) and inactivated by GTPase-activating proteins (GAPs). Functionally, small GTPase involved in protein trafficking between different compartments. Modulates vesicle budding and uncoating within the Golgi complex. In its GTP-bound form, triggers the recruitment of coatomer proteins to the Golgi membrane. The hydrolysis of ARF1-bound GTP, which is mediated by ARFGAPs proteins, is required for dissociation of coat proteins from Golgi membranes and vesicles. The GTP-bound form interacts with PICK1 to limit PICK1-mediated inhibition of Arp2/3 complex activity; the function is linked to AMPA receptor (AMPAR) trafficking, regulation of synaptic plasticity of excitatory synapses and spine shrinkage during long-term depression (LTD). Plays a key role in the regulation of intestinal stem cells and gut microbiota, and is essential for maintaining intestinal homeostasis. Also plays a critical role in mast cell expansion but not in mast cell maturation by facilitating optimal mTORC1 activation. In Bos taurus (Bovine), this protein is ADP-ribosylation factor 1 (ARF1).